The primary structure comprises 101 residues: Chaperone modulatory protein CbpM (101 aa).

It belongs to the CbpM family.

Its function is as follows. Interacts with CbpA and inhibits both the DnaJ-like co-chaperone activity and the DNA binding activity of CbpA. Together with CbpA, modulates the activity of the DnaK chaperone system. Does not inhibit the co-chaperone activity of DnaJ. The protein is Chaperone modulatory protein CbpM of Salmonella arizonae (strain ATCC BAA-731 / CDC346-86 / RSK2980).